Reading from the N-terminus, the 506-residue chain is Lysine--tRNA ligase (506 aa).

E416 and E423 together coordinate Mg(2+).

Belongs to the class-II aminoacyl-tRNA synthetase family. Homodimer. Mg(2+) is required as a cofactor.

It localises to the cytoplasm. It carries out the reaction tRNA(Lys) + L-lysine + ATP = L-lysyl-tRNA(Lys) + AMP + diphosphate. This chain is Lysine--tRNA ligase, found in Bordetella parapertussis (strain 12822 / ATCC BAA-587 / NCTC 13253).